The chain runs to 193 residues: Flagellar transcriptional regulator FlhC (193 aa).

Residues Cys-138, Cys-141, Cys-158, and Cys-161 each coordinate Zn(2+).

It belongs to the FlhC family. Heterohexamer composed of two FlhC and four FlhD subunits. Each FlhC binds a FlhD dimer, forming a heterotrimer, and a hexamer assembles by dimerization of two heterotrimers. It depends on Zn(2+) as a cofactor.

The protein localises to the cytoplasm. In terms of biological role, functions in complex with FlhD as a master transcriptional regulator that regulates transcription of several flagellar and non-flagellar operons by binding to their promoter region. Activates expression of class 2 flagellar genes, including fliA, which is a flagellum-specific sigma factor that turns on the class 3 genes. Also regulates genes whose products function in a variety of physiological pathways. The chain is Flagellar transcriptional regulator FlhC from Yersinia enterocolitica.